We begin with the raw amino-acid sequence, 449 residues long: Heterogeneous nuclear ribonucleoprotein H (449 aa).

M1 bears the N-acetylmethionine mark. Position 2 is an N-acetylmethionine; in Heterogeneous nuclear ribonucleoprotein H, N-terminally processed (M2). The RRM 1 domain maps to 11 to 90 (FVVKVRGLPW…RYVEVFKSNN (80 aa)). S23 carries the phosphoserine modification. A Glycyl lysine isopeptide (Lys-Gly) (interchain with G-Cter in SUMO2) cross-link involves residue K35. Phosphoserine is present on residues S54 and S63. Glycyl lysine isopeptide (Lys-Gly) (interchain with G-Cter in SUMO2) cross-links involve residues K87 and K98. The region spanning 111–188 (GFVRLRGLPF…RYIEIFKSSR (78 aa)) is the RRM 2 domain. R233 carries the post-translational modification Dimethylated arginine; alternate. R233 is subject to Omega-N-methylarginine; alternate. One copy of the 1-1 repeat lies at 234–249 (GAYGGGYGGYDDYNGY). The interval 234 to 433 (GAYGGGYGGY…YGGQSSMSGY (200 aa)) is 2 X 16 AA Gly-rich approximate repeats. At Y246 the chain carries Phosphotyrosine. One can recognise an RRM 3 domain in the interval 289 to 364 (HCVHMRGLPY…RYVELFLNST (76 aa)). Phosphoserine is present on S310. 3 tandem repeats follow at residues 354 to 372 (HRYVELFLNSTAGASGGAY), 374 to 392 (HRYVELFLNSTAGASGGAY), and 418 to 433 (GGYGGGYGGQSSMSGY). Residues 354–392 (HRYVELFLNSTAGASGGAYEHRYVELFLNSTAGASGGAY) form a 2 X 19 AA perfect repeats region.

In terms of assembly, part of a ternary complex containing FUBP2, PTBP1, PTBP2 and HNRNPH1. Identified in the spliceosome C complex. Interacts with IGF2BP1. Interacts with CUGBP1; the interaction is RNA-dependent. Interacts with MBNL1; the interaction in RNA-independent.

The protein resides in the nucleus. It localises to the nucleoplasm. This protein is a component of the heterogeneous nuclear ribonucleoprotein (hnRNP) complexes which provide the substrate for the processing events that pre-mRNAs undergo before becoming functional, translatable mRNAs in the cytoplasm. Mediates pre-mRNA alternative splicing regulation. Inhibits, together with CUGBP1, insulin receptor (IR) pre-mRNA exon 11 inclusion in myoblast. Binds to the IR RNA. Binds poly(RG). This chain is Heterogeneous nuclear ribonucleoprotein H (Hnrnph1), found in Rattus norvegicus (Rat).